The following is a 257-amino-acid chain: 3-deoxy-manno-octulosonate cytidylyltransferase (257 aa).

This sequence belongs to the KdsB family.

The protein localises to the cytoplasm. The catalysed reaction is 3-deoxy-alpha-D-manno-oct-2-ulosonate + CTP = CMP-3-deoxy-beta-D-manno-octulosonate + diphosphate. Its pathway is nucleotide-sugar biosynthesis; CMP-3-deoxy-D-manno-octulosonate biosynthesis; CMP-3-deoxy-D-manno-octulosonate from 3-deoxy-D-manno-octulosonate and CTP: step 1/1. It functions in the pathway bacterial outer membrane biogenesis; lipopolysaccharide biosynthesis. Its function is as follows. Activates KDO (a required 8-carbon sugar) for incorporation into bacterial lipopolysaccharide in Gram-negative bacteria. The chain is 3-deoxy-manno-octulosonate cytidylyltransferase from Halorhodospira halophila (strain DSM 244 / SL1) (Ectothiorhodospira halophila (strain DSM 244 / SL1)).